A 117-amino-acid polypeptide reads, in one-letter code: Large ribosomal subunit protein uL18 (117 aa).

Belongs to the universal ribosomal protein uL18 family. Part of the 50S ribosomal subunit; part of the 5S rRNA/L5/L18/L25 subcomplex. Contacts the 5S and 23S rRNAs.

Functionally, this is one of the proteins that bind and probably mediate the attachment of the 5S RNA into the large ribosomal subunit, where it forms part of the central protuberance. The sequence is that of Large ribosomal subunit protein uL18 from Neisseria gonorrhoeae (strain ATCC 700825 / FA 1090).